The chain runs to 137 residues: Large ribosomal subunit protein eL28 (137 aa).

Position 2 is an N-acetylserine (Ser-2). Glycyl lysine isopeptide (Lys-Gly) (interchain with G-Cter in SUMO2) cross-links involve residues Lys-58 and Lys-65. Position 115 is a phosphoserine (Ser-115).

It belongs to the eukaryotic ribosomal protein eL28 family. As to quaternary structure, component of the large ribosomal subunit.

It is found in the cytoplasm. Functionally, component of the large ribosomal subunit. The ribosome is a large ribonucleoprotein complex responsible for the synthesis of proteins in the cell. This is Large ribosomal subunit protein eL28 (RPL28) from Oryctolagus cuniculus (Rabbit).